A 217-amino-acid chain; its full sequence is Endo-1,4-beta-xylanase (217 aa).

The N-terminal stretch at 1-17 is a signal peptide; it reads MQFLIPVVILCVSLVDS. Residues 20-217 form the GH11 domain; the sequence is VLYNNEIGFN…SSGFADITVS (198 aa). Residues N56 and N80 are each glycosylated (N-linked (GlcNAc...) asparagine). The active-site Nucleophile is the E107. E204 acts as the Proton donor in catalysis.

The protein belongs to the glycosyl hydrolase 11 (cellulase G) family. Expressed in larval carcasses and gut, and adult gut.

It localises to the secreted. It catalyses the reaction Endohydrolysis of (1-&gt;4)-beta-D-xylosidic linkages in xylans.. Its pathway is glycan degradation; xylan degradation. In Phaedon cochleariae (Mustard beetle), this protein is Endo-1,4-beta-xylanase.